The chain runs to 597 residues: Elongation factor 4 (597 aa).

Residues 2 to 184 (KNIRNFSIIA…EIVAKIPAPT (183 aa)) enclose the tr-type G domain. Residues 14–19 (DHGKST) and 131–134 (NKID) contribute to the GTP site.

This sequence belongs to the TRAFAC class translation factor GTPase superfamily. Classic translation factor GTPase family. LepA subfamily.

The protein resides in the cell inner membrane. The catalysed reaction is GTP + H2O = GDP + phosphate + H(+). In terms of biological role, required for accurate and efficient protein synthesis under certain stress conditions. May act as a fidelity factor of the translation reaction, by catalyzing a one-codon backward translocation of tRNAs on improperly translocated ribosomes. Back-translocation proceeds from a post-translocation (POST) complex to a pre-translocation (PRE) complex, thus giving elongation factor G a second chance to translocate the tRNAs correctly. Binds to ribosomes in a GTP-dependent manner. This is Elongation factor 4 from Neisseria gonorrhoeae (strain ATCC 700825 / FA 1090).